A 181-amino-acid polypeptide reads, in one-letter code: Putative manganese efflux pump MntP (181 aa).

6 helical membrane-spanning segments follow: residues 5-25, 36-56, 66-86, 102-122, 130-150, and 158-178; these read LIALLIMASALGMDAFSIALG, MFKVGLTIGVFHVIMPLMGMV, GLFANWLGAGLLLWLGLVMIV, IGLFVFALSVSLDSLSAGLSL, ALAVVAMGVMSTVLSWLGLFI, and VGPYSELLGGFILCGFGVKLL.

Belongs to the MntP (TC 9.B.29) family.

It is found in the cell membrane. Functionally, probably functions as a manganese efflux pump. The polypeptide is Putative manganese efflux pump MntP (Halalkalibacterium halodurans (strain ATCC BAA-125 / DSM 18197 / FERM 7344 / JCM 9153 / C-125) (Bacillus halodurans)).